Reading from the N-terminus, the 484-residue chain is Diaminopimelate decarboxylase 1, chloroplastic (484 aa).

Residues 1 to 28 (MAAATQFLSQPSSLNPHQLKNQTSQRSR) show a composition bias toward polar residues. A disordered region spans residues 1–30 (MAAATQFLSQPSSLNPHQLKNQTSQRSRSI). The transit peptide at 1-49 (MAAATQFLSQPSSLNPHQLKNQTSQRSRSIPVLSLKSTLKPLKRLSVKA) directs the protein to the chloroplast. Position 50 is an N-acetylalanine (alanine 50). The residue at position 125 (lysine 125) is an N6-(pyridoxal phosphate)lysine. Pyridoxal 5'-phosphate-binding positions include glycine 304 and 340-343 (EPGR). 3 residues coordinate substrate: arginine 343, arginine 379, and tyrosine 383. Cysteine 411 acts as the Proton donor in catalysis. 2 residues coordinate substrate: glutamate 412 and tyrosine 440. Residue tyrosine 440 coordinates pyridoxal 5'-phosphate.

This sequence belongs to the Orn/Lys/Arg decarboxylase class-II family. LysA subfamily. In terms of assembly, homodimer. It depends on pyridoxal 5'-phosphate as a cofactor.

The protein resides in the plastid. Its subcellular location is the chloroplast. The enzyme catalyses meso-2,6-diaminopimelate + H(+) = L-lysine + CO2. It participates in amino-acid biosynthesis; L-lysine biosynthesis via DAP pathway; L-lysine from DL-2,6-diaminopimelate: step 1/1. In terms of biological role, specifically catalyzes the decarboxylation of meso-diaminopimelate (meso-DAP) to L-lysine. This chain is Diaminopimelate decarboxylase 1, chloroplastic (LYSA1), found in Arabidopsis thaliana (Mouse-ear cress).